The following is a 308-amino-acid chain: ADP-L-glycero-D-manno-heptose-6-epimerase (308 aa).

Residues 10–11 (MI), 31–32 (DN), Lys-38, Lys-53, 75–79 (EGACS), and Asn-92 contribute to the NADP(+) site. Tyr-140 (proton acceptor) is an active-site residue. Lys-144 lines the NADP(+) pocket. Residue Asn-169 coordinates substrate. Val-170 and Lys-178 together coordinate NADP(+). Lys-178 serves as the catalytic Proton acceptor. Substrate-binding positions include Ser-180, His-187, 201–204 (FEGS), Arg-209, and Tyr-272.

It belongs to the NAD(P)-dependent epimerase/dehydratase family. HldD subfamily. Homopentamer. It depends on NADP(+) as a cofactor.

The catalysed reaction is ADP-D-glycero-beta-D-manno-heptose = ADP-L-glycero-beta-D-manno-heptose. It functions in the pathway nucleotide-sugar biosynthesis; ADP-L-glycero-beta-D-manno-heptose biosynthesis; ADP-L-glycero-beta-D-manno-heptose from D-glycero-beta-D-manno-heptose 7-phosphate: step 4/4. Functionally, catalyzes the interconversion between ADP-D-glycero-beta-D-manno-heptose and ADP-L-glycero-beta-D-manno-heptose via an epimerization at carbon 6 of the heptose. The chain is ADP-L-glycero-D-manno-heptose-6-epimerase from Actinobacillus pleuropneumoniae serotype 7 (strain AP76).